A 127-amino-acid chain; its full sequence is Gamma-synuclein (127 aa).

Repeat copies occupy residues 20 to 30 and 31 to 41. The tract at residues 20 to 67 is 4 X 11 AA tandem repeats of [EGSA]-K-T-K-[EQ]-[GQ]-V-X(4); that stretch reads EKTKQGVTEAAEKTKEGVMYVGAKTKENVVQSVTSVAEKTKEQANAVS. A 3; approximate repeat occupies 42–56; that stretch reads AKTKENVVQSVTSVA. Residues 57–67 form repeat 4; sequence EKTKEQANAVS. 2 positions are modified to phosphoserine: serine 67 and serine 72. The disordered stretch occupies residues 96–127; that stretch reads RKEDLRPSAPQQEGEASKEKEEVAEEAQSGGD. Position 124 is a phosphoserine; by BARK1, CaMK2 and CK2 (serine 124).

This sequence belongs to the synuclein family. May be a centrosome-associated protein. Interacts with MYOC; affects its secretion and its aggregation. In terms of processing, phosphorylated. Phosphorylation by GRK5 appears to occur on residues distinct from the residue phosphorylated by other kinases. In terms of tissue distribution, highly expressed in brain, particularly in the substantia nigra. Also expressed in the corpus callosum, heart, skeletal muscle, ovary, testis, colon and spleen. Weak expression in pancreas, kidney and lung.

The protein localises to the cytoplasm. The protein resides in the perinuclear region. It localises to the cytoskeleton. Its subcellular location is the microtubule organizing center. It is found in the centrosome. The protein localises to the spindle. Plays a role in neurofilament network integrity. May be involved in modulating axonal architecture during development and in the adult. In vitro, increases the susceptibility of neurofilament-H to calcium-dependent proteases. May also function in modulating the keratin network in skin. Activates the MAPK and Elk-1 signal transduction pathway. The sequence is that of Gamma-synuclein (SNCG) from Homo sapiens (Human).